The primary structure comprises 303 residues: Geranylgeranyl pyrophosphate synthase (303 aa).

Residues Lys-32, Arg-35, and His-64 each contribute to the isopentenyl diphosphate site. Residues Asp-71 and Asp-75 each coordinate Mg(2+). Arg-80 serves as a coordination point for dimethylallyl diphosphate. Arg-81 is a binding site for isopentenyl diphosphate. 5 residues coordinate dimethylallyl diphosphate: Lys-158, Thr-159, Gln-192, Lys-209, and Lys-219.

It belongs to the FPP/GGPP synthase family. As to quaternary structure, homooligomer. Mg(2+) is required as a cofactor.

The protein resides in the cytoplasm. It carries out the reaction isopentenyl diphosphate + dimethylallyl diphosphate = (2E)-geranyl diphosphate + diphosphate. The catalysed reaction is isopentenyl diphosphate + (2E)-geranyl diphosphate = (2E,6E)-farnesyl diphosphate + diphosphate. It catalyses the reaction isopentenyl diphosphate + (2E,6E)-farnesyl diphosphate = (2E,6E,10E)-geranylgeranyl diphosphate + diphosphate. Its pathway is isoprenoid biosynthesis; farnesyl diphosphate biosynthesis; farnesyl diphosphate from geranyl diphosphate and isopentenyl diphosphate: step 1/1. It participates in isoprenoid biosynthesis; geranyl diphosphate biosynthesis; geranyl diphosphate from dimethylallyl diphosphate and isopentenyl diphosphate: step 1/1. The protein operates within isoprenoid biosynthesis; geranylgeranyl diphosphate biosynthesis; geranylgeranyl diphosphate from farnesyl diphosphate and isopentenyl diphosphate: step 1/1. Catalyzes the trans-addition of the three molecules of IPP onto DMAPP to form geranylgeranyl pyrophosphate, an important precursor of carotenoids and geranylated proteins. This chain is Geranylgeranyl pyrophosphate synthase (ggps1), found in Dictyostelium discoideum (Social amoeba).